The primary structure comprises 605 residues: Apoptosis-inducing factor 3 (605 aa).

Over residues 18–29 (VLPEKERGKEEL) the composition is skewed to basic and acidic residues. Residues 18 to 44 (VLPEKERGKEELSASGKGSPRGYQGNG) are disordered. Residues 70–165 (ATVCHVKDLE…VKIEKEKVTI (96 aa)) enclose the Rieske domain. [2Fe-2S] cluster is bound by residues C109, H111, C128, and H131. Residues 201–205 (GAGAA), R235, K240, V270, D467, and W514 contribute to the FAD site.

This sequence belongs to the FAD-dependent oxidoreductase family.

It localises to the mitochondrion. Induces apoptosis through a caspase dependent pathway. Reduces mitochondrial membrane potential. The polypeptide is Apoptosis-inducing factor 3 (Aifm3) (Mus musculus (Mouse)).